The sequence spans 206 residues: FMN-dependent NADH:quinone oxidoreductase 2 (206 aa).

Residues serine 10, 16-18 (SYS), and 140-143 (SCGG) contribute to the FMN site.

Belongs to the azoreductase type 1 family. As to quaternary structure, homodimer. Requires FMN as cofactor.

It catalyses the reaction 2 a quinone + NADH + H(+) = 2 a 1,4-benzosemiquinone + NAD(+). The catalysed reaction is N,N-dimethyl-1,4-phenylenediamine + anthranilate + 2 NAD(+) = 2-(4-dimethylaminophenyl)diazenylbenzoate + 2 NADH + 2 H(+). Quinone reductase that provides resistance to thiol-specific stress caused by electrophilic quinones. Its function is as follows. Also exhibits azoreductase activity. Catalyzes the reductive cleavage of the azo bond in aromatic azo compounds to the corresponding amines. In Cupriavidus pinatubonensis (strain JMP 134 / LMG 1197) (Cupriavidus necator (strain JMP 134)), this protein is FMN-dependent NADH:quinone oxidoreductase 2.